The primary structure comprises 235 residues: Matrix protein (235 aa).

It belongs to the nucleorhabdovirus type-2 matrix protein family. In terms of assembly, homomultimer. Interacts with nucleoprotein and with the cytoplasmic domain of glycoprotein.

The protein resides in the virion membrane. Its subcellular location is the host endomembrane system. Plays a major role in assembly and budding of virion. Completely covers the ribonucleoprotein coil and keep it in condensed bullet-shaped form. Inhibits viral transcription and stimulates replication. This Colocasia esculenta (Wild taro) protein is Matrix protein (M).